The primary structure comprises 186 residues: Adenine phosphoribosyltransferase (186 aa).

The protein belongs to the purine/pyrimidine phosphoribosyltransferase family. Homodimer.

It is found in the cytoplasm. It catalyses the reaction AMP + diphosphate = 5-phospho-alpha-D-ribose 1-diphosphate + adenine. It functions in the pathway purine metabolism; AMP biosynthesis via salvage pathway; AMP from adenine: step 1/1. Functionally, catalyzes a salvage reaction resulting in the formation of AMP, that is energically less costly than de novo synthesis. This Xanthomonas axonopodis pv. citri (strain 306) protein is Adenine phosphoribosyltransferase.